The primary structure comprises 426 residues: Serine--tRNA ligase (426 aa).

L-serine is bound at residue 233-235 (TSE). 264 to 266 (RSE) lines the ATP pocket. Glu287 provides a ligand contact to L-serine. ATP is bound at residue 351–354 (EISS). L-serine is bound at residue Ser387.

The protein belongs to the class-II aminoacyl-tRNA synthetase family. Type-1 seryl-tRNA synthetase subfamily. As to quaternary structure, homodimer. The tRNA molecule binds across the dimer.

It localises to the cytoplasm. The catalysed reaction is tRNA(Ser) + L-serine + ATP = L-seryl-tRNA(Ser) + AMP + diphosphate + H(+). It carries out the reaction tRNA(Sec) + L-serine + ATP = L-seryl-tRNA(Sec) + AMP + diphosphate + H(+). The protein operates within aminoacyl-tRNA biosynthesis; selenocysteinyl-tRNA(Sec) biosynthesis; L-seryl-tRNA(Sec) from L-serine and tRNA(Sec): step 1/1. In terms of biological role, catalyzes the attachment of serine to tRNA(Ser). Is also able to aminoacylate tRNA(Sec) with serine, to form the misacylated tRNA L-seryl-tRNA(Sec), which will be further converted into selenocysteinyl-tRNA(Sec). This is Serine--tRNA ligase from Xylella fastidiosa (strain M23).